Reading from the N-terminus, the 296-residue chain is 4-amino-4-deoxyprephenate dehydrogenase (296 aa).

A Prephenate/arogenate dehydrogenase domain is found at 9-288 (RCVVVGGAGA…EHGAELERLC (280 aa)).

Belongs to the prephenate/arogenate dehydrogenase family.

It carries out the reaction 4-amino-4-deoxyprephenate + NAD(+) = 3-(4-aminophenyl)pyruvate + CO2 + NADH + H(+). The protein operates within antibiotic biosynthesis. Its function is as follows. Involved in pristinamycin I biosynthesis. Probably catalyzes the formation of 3-(4-aminophenyl)pyruvate from 4-amino-4-deoxyprephenate. The sequence is that of 4-amino-4-deoxyprephenate dehydrogenase from Streptomyces pristinaespiralis.